The following is a 517-amino-acid chain: 2,3-bisphosphoglycerate-independent phosphoglycerate mutase (517 aa).

Positions 14 and 64 each coordinate Mn(2+). Serine 64 acts as the Phosphoserine intermediate in catalysis. Substrate contacts are provided by residues histidine 125, 155–156 (RD), arginine 187, arginine 193, 263–266 (RSDR), and lysine 337. The Mn(2+) site is built by aspartate 404, histidine 408, aspartate 445, histidine 446, and histidine 464.

The protein belongs to the BPG-independent phosphoglycerate mutase family. As to quaternary structure, monomer. Requires Mn(2+) as cofactor.

It carries out the reaction (2R)-2-phosphoglycerate = (2R)-3-phosphoglycerate. Its pathway is carbohydrate degradation; glycolysis; pyruvate from D-glyceraldehyde 3-phosphate: step 3/5. Functionally, catalyzes the interconversion of 2-phosphoglycerate and 3-phosphoglycerate. The chain is 2,3-bisphosphoglycerate-independent phosphoglycerate mutase from Nitrosococcus oceani (strain ATCC 19707 / BCRC 17464 / JCM 30415 / NCIMB 11848 / C-107).